Reading from the N-terminus, the 189-residue chain is FUN14 domain-containing protein 2 (189 aa).

At M1–K80 the chain is on the cytoplasmic side. Phosphoserine is present on residues S10 and S53. Residues Y81 to F101 form a helical membrane-spanning segment. Topologically, residues Q102 to L107 are mitochondrial intermembrane. Residues A108–I128 form a helical membrane-spanning segment. The Cytoplasmic portion of the chain corresponds to K129–E164. Residue S151 is modified to Phosphoserine. A helical membrane pass occupies residues V165–L185. At G186–S189 the chain is on the mitochondrial intermembrane side.

It belongs to the FUN14 family. Highly expressed in platelets (at protein level).

It is found in the mitochondrion outer membrane. It localises to the nucleus. Its function is as follows. Binds directly and specifically 1,2-Diacyl-sn-glycero-3-phospho-(1'-myo-inositol-3',4',5'-bisphosphate) (PIP3) leading to the recruitment of PIP3 to mitochondria and may play a role in the regulation of the platelet activation via AKT/GSK3B/cGMP signaling pathways. May act as transcription factor that regulates SREBP1 (isoform SREBP-1C) expression in order to modulate triglyceride (TG) homeostasis in hepatocytes. In Homo sapiens (Human), this protein is FUN14 domain-containing protein 2.